A 198-amino-acid chain; its full sequence is Imidazole glycerol phosphate synthase subunit HisH (198 aa).

The Glutamine amidotransferase type-1 domain occupies 2 to 198; the sequence is KALLIDYGSG…ALARRYFEVL (197 aa). The active-site Nucleophile is Cys-80. Catalysis depends on residues His-176 and Glu-178.

In terms of assembly, heterodimer of HisH and HisF.

It is found in the cytoplasm. The enzyme catalyses 5-[(5-phospho-1-deoxy-D-ribulos-1-ylimino)methylamino]-1-(5-phospho-beta-D-ribosyl)imidazole-4-carboxamide + L-glutamine = D-erythro-1-(imidazol-4-yl)glycerol 3-phosphate + 5-amino-1-(5-phospho-beta-D-ribosyl)imidazole-4-carboxamide + L-glutamate + H(+). It carries out the reaction L-glutamine + H2O = L-glutamate + NH4(+). It participates in amino-acid biosynthesis; L-histidine biosynthesis; L-histidine from 5-phospho-alpha-D-ribose 1-diphosphate: step 5/9. Functionally, IGPS catalyzes the conversion of PRFAR and glutamine to IGP, AICAR and glutamate. The HisH subunit catalyzes the hydrolysis of glutamine to glutamate and ammonia as part of the synthesis of IGP and AICAR. The resulting ammonia molecule is channeled to the active site of HisF. In Thermus thermophilus (strain ATCC BAA-163 / DSM 7039 / HB27), this protein is Imidazole glycerol phosphate synthase subunit HisH.